The sequence spans 68 residues: uncharacterized protein (68 aa).

Residues 1-42 (MHLCQNGHYYKPHRASAEKVPYLKKKKKNSRNEGKAKKKNEK) form a disordered region.

This is an uncharacterized protein from Saccharomyces cerevisiae (strain ATCC 204508 / S288c) (Baker's yeast).